The primary structure comprises 165 residues: Nucleotide-binding protein RoseRS_0530 (165 aa).

Belongs to the YajQ family.

Nucleotide-binding protein. The protein is Nucleotide-binding protein RoseRS_0530 of Roseiflexus sp. (strain RS-1).